Reading from the N-terminus, the 87-residue chain is MTILSAITSISRPNKSSKSVVSSNGGSSLSMGSNSVSCFNACGGGSSYSYSSSYSGSGLDYSYKANYSSSNGYNSSVVIASSTCHCS.

Positions 1-13 (MTILSAITSISRP) are enriched in polar residues. Residues 1 to 31 (MTILSAITSISRPNKSSKSVVSSNGGSSLSM) form a disordered region. A compositionally biased stretch (low complexity) spans 14-31 (NKSSKSVVSSNGGSSLSM).

The protein belongs to the hssA/B family.

The sequence is that of HssA/B-like protein 55 (hssl55) from Dictyostelium discoideum (Social amoeba).